Reading from the N-terminus, the 363-residue chain is tRNA (guanine(26)-N(2))-dimethyltransferase (363 aa).

Positions 5-352 (VLRREGGVKF…GEYGEVLMAF (348 aa)) constitute a Trm1 methyltransferase domain. 5 residues coordinate S-adenosyl-L-methionine: Arg40, Arg67, Asp85, Asp111, and Ala112.

This sequence belongs to the class I-like SAM-binding methyltransferase superfamily. Trm1 family.

It catalyses the reaction guanosine(26) in tRNA + 2 S-adenosyl-L-methionine = N(2)-dimethylguanosine(26) in tRNA + 2 S-adenosyl-L-homocysteine + 2 H(+). Functionally, dimethylates a single guanine residue at position 26 of a number of tRNAs using S-adenosyl-L-methionine as donor of the methyl groups. This Pyrobaculum aerophilum (strain ATCC 51768 / DSM 7523 / JCM 9630 / CIP 104966 / NBRC 100827 / IM2) protein is tRNA (guanine(26)-N(2))-dimethyltransferase.